A 495-amino-acid polypeptide reads, in one-letter code: Tripartite motif-containing protein 5 (495 aa).

An N-acetylalanine modification is found at A2. The RING-type zinc finger occupies 15-60; it reads CPICLELLTEPLSLPCGHSFCQACITANHKKSMLYKEEERSCPVCR. A Phosphoserine modification is found at S87. The B box-type zinc-finger motif lies at 92-133; it reads QKVDHCARHGEKLLLFCQEDRKVICWLCERSQEHRGHHTFLM. 4 residues coordinate Zn(2+): C97, H100, C119, and H125. Residues 137 to 177 adopt a coiled-coil conformation; sequence AQEYHVKLQTALEMLRQKQQEAEKLEADIREEKASWKIQID. A required for interaction with GABARAP and for autophagy region spans residues 187–200; sequence FEQLREILDWEESN. A B30.2/SPRY domain is found at 283–495; the sequence is LKGMLDMFRE…VPMTLCSPSS (213 aa).

This sequence belongs to the TRIM/RBCC family. In terms of assembly, can form homodimers and homotrimers. In addition to lower-order dimerization, also exhibits a higher-order multimerization and both low- and high-order multimerizations are essential for its restriction activity. Interacts with BTBD1 and BTBD2. Interacts with PSMC4, PSMC5, PSMD7 and HSPA8/HSC70. Interacts (via B30.2/SPRY domain) with HSPA1A/B. Interacts with PSMC2, MAP3K7/TAK1, TAB2 and TAB3. Interacts with SQSTM1. Interacts with TRIM6 and TRIM34. Interacts with ULK1 (phosphorylated form), GABARAP, GABARAPL1, GABARAPL2, MAP1LC3A, MAP1LC3C and BECN1. Degraded in a proteasome-independent fashion in the absence of viral infection but in a proteasome-dependent fashion following exposure to restriction sensitive virus. In terms of processing, autoubiquitinated in a RING finger- and UBE2D2-dependent manner. Monoubiquitinated by TRIM21. Deubiquitinated by Yersinia YopJ. Ubiquitination may not lead to proteasomal degradation.

The protein localises to the cytoplasm. The protein resides in the nucleus. It catalyses the reaction S-ubiquitinyl-[E2 ubiquitin-conjugating enzyme]-L-cysteine + [acceptor protein]-L-lysine = [E2 ubiquitin-conjugating enzyme]-L-cysteine + N(6)-ubiquitinyl-[acceptor protein]-L-lysine.. It participates in protein modification; protein ubiquitination. Functionally, capsid-specific restriction factor that prevents infection from non-host-adapted retroviruses. Blocks viral replication early in the life cycle, after viral entry but before reverse transcription. In addition to acting as a capsid-specific restriction factor, also acts as a pattern recognition receptor that activates innate immune signaling in response to the retroviral capsid lattice. Binding to the viral capsid triggers its E3 ubiquitin ligase activity, and in concert with the heterodimeric ubiquitin conjugating enzyme complex UBE2V1-UBE2N (also known as UBC13-UEV1A complex) generates 'Lys-63'-linked polyubiquitin chains, which in turn are catalysts in the autophosphorylation of the MAP3K7/TAK1 complex (includes TAK1, TAB2, and TAB3). Activation of the MAP3K7/TAK1 complex by autophosphorylation results in the induction and expression of NF-kappa-B and MAPK-responsive inflammatory genes, thereby leading to an innate immune response in the infected cell. Plays a role in regulating autophagy through activation of autophagy regulator BECN1 by causing its dissociation from its inhibitors BCL2 and TAB2. This is Tripartite motif-containing protein 5 (TRIM5) from Erythrocebus patas (Red guenon).